Reading from the N-terminus, the 425-residue chain is MGETAQIQAKFFTKDERYSVPDTPFSIAGSTTPEQLSSLINALLKESSASPDQDEQPAFDFLINGELLRLTLEEHLETKEIPQETIVHLEYLEKCPPPSPVDSLIHDDWVSAVHASEAGILSGCYDNTLHIWDTATGTRRLTIPGHLGPIKSVKWVAVAEPPCTFVSTSHDETAMLWQWDRRTNAVESVQVCRGHARSVDCVDVSWNGAKFVTGSFDHMLKVWSADPDSTDTDHGQDGSEEGSRKKQKTVDGKAKTRVPVLTLAGHHEAVTGVQWTDEGEVATCSMDHTLRIWDVELGGMKSQLAGSKAFLGISYSRLNRQIVSASSDRHVRLWDPRTKDGTIVKCSYTSHAGWVSAVHWAPNSDHQFISGSYDTLMKLWDARSPKAPLYDMSGHEDKVLAVDWSLGKYMISGGADNQLKIFEHK.

Residues 7–93 (IQAKFFTKDE…ETIVHLEYLE (87 aa)) form a ubiquitin-like (UBL) domain region. WD repeat units lie at residues 105 to 142 (IHDD…RRLT), 145 to 187 (GHLG…NAVE), 194 to 233 (GHAR…TDTD), 265 to 303 (GHHE…MKSQ), 305 to 344 (AGSK…GTIV), 350 to 390 (SHAG…APLY), and 394 to 425 (GHED…FEHK). The tract at residues 227-253 (PDSTDTDHGQDGSEEGSRKKQKTVDGK) is disordered. Positions 231–253 (DTDHGQDGSEEGSRKKQKTVDGK) are enriched in basic and acidic residues.

This sequence belongs to the WD repeat WDR12/YTM1 family.

It localises to the nucleus. The protein resides in the nucleolus. The protein localises to the nucleoplasm. Its function is as follows. Required for maturation of ribosomal RNAs and formation of the large ribosomal subunit. In Ixodes scapularis (Black-legged tick), this protein is Ribosome biogenesis protein WDR12 homolog.